A 481-amino-acid polypeptide reads, in one-letter code: UDP-glycosyltransferase 88F4 (481 aa).

UDP-alpha-D-glucose contacts are provided by residues Ser-288, 357 to 358 (WA), 375 to 383 (HCGWNSVLE), and 397 to 400 (YAEQ).

This sequence belongs to the UDP-glycosyltransferase family.

Glycosyltransferase that may possess chalcone and dihydrochalcone 2'-O-glucosyltransferase activity. The chain is UDP-glycosyltransferase 88F4 from Malus domestica (Apple).